The primary structure comprises 272 residues: Orotidine 5'-phosphate decarboxylase (272 aa).

Lys95 functions as the Proton donor in the catalytic mechanism.

It belongs to the OMP decarboxylase family. Type 2 subfamily.

The enzyme catalyses orotidine 5'-phosphate + H(+) = UMP + CO2. Its pathway is pyrimidine metabolism; UMP biosynthesis via de novo pathway; UMP from orotate: step 2/2. The protein is Orotidine 5'-phosphate decarboxylase of Cupriavidus metallidurans (strain ATCC 43123 / DSM 2839 / NBRC 102507 / CH34) (Ralstonia metallidurans).